A 247-amino-acid chain; its full sequence is Fumarate reductase iron-sulfur subunit (247 aa).

Residue tyrosine 12 participates in a menaquinone binding. The region spanning 14-94 is the 2Fe-2S ferredoxin-type domain; it reads PEIESAPTFQ…PGPVRVEPMR (81 aa). Residues cysteine 56, cysteine 61, and cysteine 76 each contribute to the [2Fe-2S] cluster site. Residues 140–169 form the 4Fe-4S ferredoxin-type domain; sequence LDAFKQFSMCINCMLCYSACPVYALDPDFL. Cysteine 149, cysteine 152, and cysteine 155 together coordinate [4Fe-4S] cluster. 3 residues coordinate [3Fe-4S] cluster: cysteine 159, cysteine 205, and cysteine 211. Cysteine 215 is a [4Fe-4S] cluster binding site. Residue 226–229 coordinates a menaquinone; sequence QRYK.

Belongs to the succinate dehydrogenase/fumarate reductase iron-sulfur protein family. Fumarate dehydrogenase forms part of an enzyme complex containing four subunits: a flavoprotein, an iron-sulfur, and two hydrophobic anchor proteins. [2Fe-2S] cluster serves as cofactor. [3Fe-4S] cluster is required as a cofactor. The cofactor is [4Fe-4S] cluster.

The protein localises to the cell membrane. The enzyme catalyses a quinone + succinate = fumarate + a quinol. The catalysed reaction is a menaquinone + succinate = a menaquinol + fumarate. The polypeptide is Fumarate reductase iron-sulfur subunit (frdB) (Mycobacterium tuberculosis (strain CDC 1551 / Oshkosh)).